The chain runs to 122 residues: Large ribosomal subunit protein bL12 (122 aa).

It belongs to the bacterial ribosomal protein bL12 family. As to quaternary structure, homodimer. Part of the ribosomal stalk of the 50S ribosomal subunit. Forms a multimeric L10(L12)X complex, where L10 forms an elongated spine to which 2 to 4 L12 dimers bind in a sequential fashion. Binds GTP-bound translation factors.

Its function is as follows. Forms part of the ribosomal stalk which helps the ribosome interact with GTP-bound translation factors. Is thus essential for accurate translation. This Clostridium botulinum (strain Langeland / NCTC 10281 / Type F) protein is Large ribosomal subunit protein bL12.